The sequence spans 256 residues: Catechol O-methyltransferase A (256 aa).

The first 27 residues, 1–27, serve as a signal peptide directing secretion; it reads MLWVVLAVVVVLASVLVLLRQSSGLLA. Residue Asn-58 is glycosylated (N-linked (GlcNAc...) asparagine). Residues Val-84, Ser-114, Glu-132, and Asp-183 each coordinate S-adenosyl-L-methionine. Residue Asp-183 participates in Mg(2+) binding. Lys-186 provides a ligand contact to substrate. Mg(2+) contacts are provided by Asp-211 and Asn-212. Substrate contacts are provided by Asn-212 and Glu-241.

This sequence belongs to the class I-like SAM-binding methyltransferase superfamily. Cation-dependent O-methyltransferase family. It depends on Mg(2+) as a cofactor. Widely expressed. Has higher expression in females compared to males. Strongly expressed in liver and diencephalon. Expressed at lower levels in hindbrain, spinal cord, eye, telencephalon, spleen, gut, gill and muscle. Detected in ovary and testis. In eye, detected in all layers of the retina with highest expression in the inner nuclear layer. In gut, expressed in the lamina propria but has little or no expression in gut epithelium. In brain, has strongest expression near the midline of the telencephalon, in the periventricular gray zone of the optic tectum, in the preglomerular nucleus, and near the walls of the diencephalic ventricle.

It is found in the secreted. It catalyses the reaction a catechol + S-adenosyl-L-methionine = a guaiacol + S-adenosyl-L-homocysteine + H(+). In terms of biological role, catalyzes the O-methylation, and thereby the inactivation, of catecholamine neurotransmitters and catechol hormones. Shows highest activity towards catecholestrogens and dobutamine. Also has lower activity towards L-DOPA, dopamine and epinephrine. Active towards the xenobiotic compounds methyl-DOPA, carbidopa, isoproterenol, and apomorphine. The polypeptide is Catechol O-methyltransferase A (Danio rerio (Zebrafish)).